We begin with the raw amino-acid sequence, 569 residues long: Potassium-transporting ATPase potassium-binding subunit (569 aa).

Helical transmembrane passes span 3 to 23, 68 to 88, 136 to 156, 179 to 199, 259 to 279, 284 to 304, 384 to 404, 422 to 442, 490 to 510, and 534 to 554; these read LMEY…SPVL, AASL…VLML, VGLA…AVAV, VLYV…GQGV, LQML…GEAV, HAWT…LSLY, GLYG…LMVG, AMLA…VAAV, LALA…GVAG, and LLLT…ALAL.

This sequence belongs to the KdpA family. As to quaternary structure, the system is composed of three essential subunits: KdpA, KdpB and KdpC.

It is found in the cell inner membrane. Its function is as follows. Part of the high-affinity ATP-driven potassium transport (or Kdp) system, which catalyzes the hydrolysis of ATP coupled with the electrogenic transport of potassium into the cytoplasm. This subunit binds the periplasmic potassium ions and delivers the ions to the membrane domain of KdpB through an intramembrane tunnel. The protein is Potassium-transporting ATPase potassium-binding subunit of Nitratidesulfovibrio vulgaris (strain DP4) (Desulfovibrio vulgaris).